Consider the following 144-residue polypeptide: Large ribosomal subunit protein uL15 (144 aa).

Residues 24–52 form a disordered region; the sequence is GSGLGKTAGRGHKGLKSRSGGSVRPGFEG.

This sequence belongs to the universal ribosomal protein uL15 family. As to quaternary structure, part of the 50S ribosomal subunit.

Functionally, binds to the 23S rRNA. The protein is Large ribosomal subunit protein uL15 of Cellvibrio japonicus (strain Ueda107) (Pseudomonas fluorescens subsp. cellulosa).